Reading from the N-terminus, the 189-residue chain is Elongation factor P (189 aa).

Lys34 bears the N6-(3,6-diaminohexanoyl)-5-hydroxylysine mark.

The protein belongs to the elongation factor P family. Post-translationally, may be beta-lysylated on the epsilon-amino group of Lys-34 by the combined action of EpmA and EpmB, and then hydroxylated on the C5 position of the same residue by EpmC (if this protein is present). Lysylation is critical for the stimulatory effect of EF-P on peptide-bond formation. The lysylation moiety may extend toward the peptidyltransferase center and stabilize the terminal 3-CCA end of the tRNA. Hydroxylation of the C5 position on Lys-34 may allow additional potential stabilizing hydrogen-bond interactions with the P-tRNA.

The protein resides in the cytoplasm. It participates in protein biosynthesis; polypeptide chain elongation. Its function is as follows. Involved in peptide bond synthesis. Alleviates ribosome stalling that occurs when 3 or more consecutive Pro residues or the sequence PPG is present in a protein, possibly by augmenting the peptidyl transferase activity of the ribosome. Modification of Lys-34 is required for alleviation. The sequence is that of Elongation factor P from Francisella tularensis subsp. novicida (strain U112).